A 394-amino-acid polypeptide reads, in one-letter code: F-box protein At2g17830 (394 aa).

Positions 1–47 (MAIMSDLPRDLLAEILSRVPLASLRSVRFTCKKWNDLSKDRSFLKKQ) constitute an F-box domain.

The sequence is that of F-box protein At2g17830 from Arabidopsis thaliana (Mouse-ear cress).